The chain runs to 420 residues: Serine protease inhibitor A3B (420 aa).

An N-terminal signal peptide occupies residues 1–17 (MAFIAALGLLMAEICPA). Residues Asn-104 and Asn-349 are each glycosylated (N-linked (GlcNAc...) asparagine). The tract at residues 367 to 392 (GTEGDAITIVGYNFMSAKLKPVFVKF) is RCL.

It belongs to the serpin family.

It localises to the secreted. The sequence is that of Serine protease inhibitor A3B (Serpina3b) from Mus musculus (Mouse).